The primary structure comprises 150 residues: MALSYKEKLIECIDNELQNGGTLLLLTNNNVVSEISYYGNGYKYFTFNTNHDLISQEELKGATSNNIARMIYNWIMKNPQNNKIWNGEPQTRIYFENNVYHTNYNHECIKDFWEVSTKVGPCIFNDRSIWCTKCTTFYPFSNILSPNMLE.

It belongs to the asfivirus A151R family. In terms of assembly, monomer. Homodimer. Interacts with protein B119L. Interacts with membrane protein E248R. It depends on Zn(2+) as a cofactor.

Its function is as follows. May participate in a redox cascade for the formation of disulfide bonds in viral proteins. This African swine fever virus (isolate Tick/Malawi/Lil 20-1/1983) (ASFV) protein is Protein A151R.